We begin with the raw amino-acid sequence, 207 residues long: Cytochrome c biogenesis ATP-binding export protein CcmA (207 aa).

In terms of domain architecture, ABC transporter spans 4–207 (LEARELLCER…RISLTQTGAA (204 aa)). 36–43 (GSNGAGKT) is a binding site for ATP.

It belongs to the ABC transporter superfamily. CcmA exporter (TC 3.A.1.107) family. The complex is composed of two ATP-binding proteins (CcmA) and two transmembrane proteins (CcmB).

It is found in the cell inner membrane. It carries out the reaction heme b(in) + ATP + H2O = heme b(out) + ADP + phosphate + H(+). In terms of biological role, part of the ABC transporter complex CcmAB involved in the biogenesis of c-type cytochromes; once thought to export heme, this seems not to be the case, but its exact role is uncertain. Responsible for energy coupling to the transport system. The protein is Cytochrome c biogenesis ATP-binding export protein CcmA of Escherichia coli (strain UTI89 / UPEC).